A 64-amino-acid chain; its full sequence is Large ribosomal subunit protein bL33 (64 aa).

Belongs to the bacterial ribosomal protein bL33 family.

The chain is Large ribosomal subunit protein bL33 from Gloeothece citriformis (strain PCC 7424) (Cyanothece sp. (strain PCC 7424)).